The sequence spans 121 residues: Basic phospholipase A2 F17 (121 aa).

Cystine bridges form between Cys-25/Cys-114, Cys-27/Cys-43, Cys-42/Cys-94, Cys-48/Cys-121, Cys-49/Cys-87, Cys-56/Cys-80, and Cys-74/Cys-85. Ca(2+) is bound by residues Tyr-26, Gly-28, and Gly-30. The active site involves His-46. Residue Asp-47 participates in Ca(2+) binding. Asp-88 is a catalytic residue.

The protein belongs to the phospholipase A2 family. Group II subfamily. D49 sub-subfamily. As to quaternary structure, when this protein is associated with crotapotin (F5 or F7), it forms the crotoxin protein. Requires Ca(2+) as cofactor. As to expression, expressed by the venom gland.

The protein resides in the secreted. It catalyses the reaction a 1,2-diacyl-sn-glycero-3-phosphocholine + H2O = a 1-acyl-sn-glycero-3-phosphocholine + a fatty acid + H(+). Activated by heparin. Inhibited by its chaperone crotapotin. Its function is as follows. Snake venom phospholipase A2 (PLA2) that has anticoagulant activity and inhibits bactericial growth of the Gram-negative bacteria Xanthomonas axonopodis pv. passiflorae (in monomeric form). PLA2 catalyzes the calcium-dependent hydrolysis of the 2-acyl groups in 3-sn-phosphoglycerides. The chain is Basic phospholipase A2 F17 from Crotalus durissus terrificus (South American rattlesnake).